The primary structure comprises 570 residues: Developmental and secondary metabolism regulator veA (570 aa).

4 disordered regions span residues 1–24 (MATR…ISRE), 39–60 (ERAR…VDPP), 266–491 (DMYA…LGSG), and 504–541 (KRSH…DYGR). One can recognise a Velvet domain in the interval 25 to 231 (GKKITYKLSV…AEQGCRVRIR (207 aa)). A Nuclear localization signal motif is present at residues 39-44 (ERARAC). The segment covering 278-287 (STSISTTADT) has biased composition (polar residues). The segment covering 315 to 335 (SMPAASAAPAPAPVHSPATSA) has biased composition (low complexity). 3 stretches are compositionally biased toward polar residues: residues 336–354 (QTSS…SQYP), 363–395 (QSAT…TSSG), and 427–445 (NMQT…YPTL). Positions 454–493 (PTPANHVTSLPPLKVLSGEYSHPSQPNAQSPHHDLGSGKR) are PEST. A compositionally biased stretch (basic and acidic residues) spans 505–526 (RSHEETFGSDERPLHNGMRPDM).

Belongs to the velvet family. VeA subfamily. As to quaternary structure, component of the heterotrimeric velvet complex composed of laeA, veA and velB; VeA acting as a bridging protein between laeA and velB.

The protein localises to the nucleus. It localises to the cytoplasm. In terms of biological role, component of the velvet transcription factor complex that controls sexual/asexual developmental ratio in response to light, promoting sexual development in the darkness while stimulating asexual sporulation under illumination. The velvet complex hat acts as a global regulator for secondary metabolite gene expression. Controls the expression of hundreds of genes, including those comprising more than a dozen known secondary metabolite gene clusters. Controls the expression of the gliotoxin gene cluster. Controls the expression of the fumagillin, fumitremorgin G, fumigaclavine C and glionitrin gene clusters. The regulation of the fumagillin gene cluster and fumagillin production is performed through direct control of the expression of fumR. Negatively regulates conidiation. Required for normal protease activity. The sequence is that of Developmental and secondary metabolism regulator veA from Aspergillus fumigatus (strain ATCC MYA-4609 / CBS 101355 / FGSC A1100 / Af293) (Neosartorya fumigata).